We begin with the raw amino-acid sequence, 326 residues long: Pyruvate dehydrogenase E1 component subunit alpha (326 aa).

In terms of assembly, heterodimer of an alpha and a beta chain. Thiamine diphosphate serves as cofactor.

It catalyses the reaction N(6)-[(R)-lipoyl]-L-lysyl-[protein] + pyruvate + H(+) = N(6)-[(R)-S(8)-acetyldihydrolipoyl]-L-lysyl-[protein] + CO2. In terms of biological role, the pyruvate dehydrogenase complex catalyzes the overall conversion of pyruvate to acetyl-CoA and CO(2). It contains multiple copies of three enzymatic components: pyruvate dehydrogenase (E1), dihydrolipoamide acetyltransferase (E2) and lipoamide dehydrogenase (E3). The chain is Pyruvate dehydrogenase E1 component subunit alpha (pdhA) from Rickettsia bellii (strain RML369-C).